Reading from the N-terminus, the 304-residue chain is HTH-type transcriptional activator CmpR (304 aa).

In terms of domain architecture, HTH lysR-type spans 1–61 (MKNATLHQFE…EQIGRKIYLT (61 aa)). Residues 21–40 (FTKAAEELFLTQPTVSQQMK) constitute a DNA-binding region (H-T-H motif).

Belongs to the LysR transcriptional regulatory family.

It is found in the cytoplasm. Activates transcription of the cmpABCD operon under carbon dioxide-limited conditions. Specifically binds to the cmpR-cmpA intergenic region. The polypeptide is HTH-type transcriptional activator CmpR (cmpR) (Synechocystis sp. (strain ATCC 27184 / PCC 6803 / Kazusa)).